Reading from the N-terminus, the 105-residue chain is V-type ATP synthase subunit F (105 aa).

The protein belongs to the V-ATPase F subunit family.

Produces ATP from ADP in the presence of a proton gradient across the membrane. In Clostridium perfringens (strain 13 / Type A), this protein is V-type ATP synthase subunit F.